The primary structure comprises 227 residues: MGQKVNPNGFRFGITRNHNAIWYADKNKFSINLLEDVKIHRFFEKLTREYQIGNTVIRRDRNNAITVLVYTAKLGSFLGASGENLKKIVEKLRKTLKNRKIVINVDAVDIQSPELNAKLMAELIAEKLEQRKSYRIAQKFAIRTALKNGATGVKTIVCGRLNGVEMARCEGYAEGEMKLHTLRQNVEYATAIAKTTYGILGVKVWVSLGEIKEKTDIDAIIRADKRR.

In terms of domain architecture, KH type-2 spans 39-109 (IHRFFEKLTR…KIVINVDAVD (71 aa)).

Belongs to the universal ribosomal protein uS3 family. In terms of assembly, part of the 30S ribosomal subunit. Forms a tight complex with proteins S10 and S14.

Binds the lower part of the 30S subunit head. Binds mRNA in the 70S ribosome, positioning it for translation. The protein is Small ribosomal subunit protein uS3 of Mesomycoplasma hyopneumoniae (strain 232) (Mycoplasma hyopneumoniae).